The primary structure comprises 259 residues: DNA-directed RNA polymerase 30 kDa polypeptide (259 aa).

The TFIIS-type zinc-finger motif lies at 155 to 195; the sequence is YNTPCPNCKSRNTTPMMIQTRAADEPPLVRHACRDCKQHFK. Residues Cys159, Cys162, Cys187, and Cys190 each coordinate Zn(2+). Residues 220–259 form a disordered region; that stretch reads EILPDNNPSPPESPEPASPIDDGLIRATFDRNDEPPEDDE. Pro residues predominate over residues 226-236; the sequence is NPSPPESPEPA.

This sequence belongs to the poxviridae DNA-directed RNA polymerase 30 kDa subunit family. As to quaternary structure, the DNA-dependent RNA polymerase (vRNAP) consists of eight subunits encoded by early viral genes and termed according to their apparent molecular masses Rpo147, Rpo132, Rpo35, Rpo30, Rpo22, Rpo19, Rpo18, and Rpo7. The same holoenzyme, with the addition of the transcription-specificity factor RAP94, is used for early gene expression.

It is found in the virion. The protein resides in the host cytoplasm. It catalyses the reaction RNA(n) + a ribonucleoside 5'-triphosphate = RNA(n+1) + diphosphate. Its function is as follows. Part of the DNA-dependent RNA polymerase which catalyzes the transcription of viral DNA into RNA using the four ribonucleoside triphosphates as substrates. Responsible for the transcription of early, intermediate and late genes. DNA-dependent RNA polymerase associates with the early transcription factor (ETF), itself composed of OPG118 and OPG134, thereby allowing the early genes transcription. Late transcription, and probably also intermediate transcription, require newly synthesized RNA polymerase. The protein is DNA-directed RNA polymerase 30 kDa polypeptide (OPG066) of Homo sapiens (Human).